We begin with the raw amino-acid sequence, 474 residues long: Putative pectinesterase/pectinesterase inhibitor 38 (474 aa).

Positions 1-130 are pectinesterase inhibitor 38; the sequence is MVFGNEMCDE…HSLESITIDV (130 aa). N-linked (GlcNAc...) asparagine glycosylation occurs at N80. The segment at 164–461 is pectinesterase 38; sequence DVVVAQDGSG…TLPKFIDSAS (298 aa). T241 and Q271 together coordinate substrate. D294 acts as the Proton donor; for pectinesterase activity in catalysis. Cysteines 308 and 328 form a disulfide. D315 serves as the catalytic Nucleophile; for pectinesterase activity. N351 is a glycosylation site (N-linked (GlcNAc...) asparagine). Residues R380 and W382 each contribute to the substrate site. N409 carries N-linked (GlcNAc...) asparagine glycosylation.

The protein in the N-terminal section; belongs to the PMEI family. It in the C-terminal section; belongs to the pectinesterase family.

It is found in the secreted. It localises to the cell wall. The enzyme catalyses [(1-&gt;4)-alpha-D-galacturonosyl methyl ester](n) + n H2O = [(1-&gt;4)-alpha-D-galacturonosyl](n) + n methanol + n H(+). Its pathway is glycan metabolism; pectin degradation; 2-dehydro-3-deoxy-D-gluconate from pectin: step 1/5. Its function is as follows. Acts in the modification of cell walls via demethylesterification of cell wall pectin. The polypeptide is Putative pectinesterase/pectinesterase inhibitor 38 (PME38) (Arabidopsis thaliana (Mouse-ear cress)).